The following is a 326-amino-acid chain: Tetraacyldisaccharide 4'-kinase (326 aa).

55 to 62 (TAGGNGKT) lines the ATP pocket.

Belongs to the LpxK family.

The enzyme catalyses a lipid A disaccharide + ATP = a lipid IVA + ADP + H(+). Its pathway is glycolipid biosynthesis; lipid IV(A) biosynthesis; lipid IV(A) from (3R)-3-hydroxytetradecanoyl-[acyl-carrier-protein] and UDP-N-acetyl-alpha-D-glucosamine: step 6/6. Its function is as follows. Transfers the gamma-phosphate of ATP to the 4'-position of a tetraacyldisaccharide 1-phosphate intermediate (termed DS-1-P) to form tetraacyldisaccharide 1,4'-bis-phosphate (lipid IVA). This Klebsiella pneumoniae subsp. pneumoniae (strain ATCC 700721 / MGH 78578) protein is Tetraacyldisaccharide 4'-kinase.